The chain runs to 531 residues: MVQGEESSWRMERAALPLNQALAYGVQAHAAAAAAPPTCFLDFQPAAASAAYFGFGELEEALIHGGGAASAGGGVDPGVIIKNDVAQAKSAAGYLAGAGTGRPPTLEIFPSWPMRHQQQLHSGNSQSVGSTGTDSSSAQNTMSQMELVSPASSAPRQEVMMVTTDDYSYKPGLAAAPAAAAPPSFQQHHPLPLQLHGGEGGGDHDKRKHGSTRKDGKLVDAKTERRLAQNREAARKSRLRKKAYVQQLETSRIRLQQVEHELQRARSQGLFVGGCSAAGDMSSGAAMFDMEYARWLDDDTKRLAELRGGLQAHLLDGNLGLIVEECMQHYDELFQLKAALARSDVFHLLTGSWATPAERCFFWMGGFRPSELLKILIPQLDPLTEQQLLGICNLQQSSEQAEEALAQGLHQLHQSLADTVAAGTLNDGAAAPNYMNIMAVALEKLASLENFYQQADNLRHQTLHQMRRILTTRQAARCFLSIGEYYSRLRALSNLWASRPRDNFIGTESLSPTATELQALHHQQQNQFAGF.

Disordered stretches follow at residues 115-154 (RHQQ…ASSA) and 195-220 (LHGG…KLVD). A compositionally biased stretch (polar residues) spans 116 to 154 (HQQQLHSGNSQSVGSTGTDSSSAQNTMSQMELVSPASSA). The region spanning 220–264 (DAKTERRLAQNREAARKSRLRKKAYVQQLETSRIRLQQVEHELQR) is the bZIP domain. The basic motif stretch occupies residues 222 to 242 (KTERRLAQNREAARKSRLRKK). Residues 224–231 (ERRLAQNR) carry the Nuclear localization signal motif. The segment at 248–262 (LETSRIRLQQVEHEL) is leucine-zipper. A DOG1 domain is found at 285-499 (AAMFDMEYAR…RALSNLWASR (215 aa)).

The protein belongs to the bZIP family. As to quaternary structure, binds DNA as a dimer. Expression in meristem/developing ligule regions.

Its subcellular location is the nucleus. Required for the formation of the blade-sheath boundary in leaves. Promotes flowering. In Zea mays (Maize), this protein is Transcription factor LG2.